Here is a 182-residue protein sequence, read N- to C-terminus: Large ribosomal subunit protein uL5 (182 aa).

This sequence belongs to the universal ribosomal protein uL5 family. Part of the 50S ribosomal subunit; part of the 5S rRNA/L5/L18/L25 subcomplex. Contacts the 5S rRNA and the P site tRNA. Forms a bridge to the 30S subunit in the 70S ribosome.

Its function is as follows. This is one of the proteins that bind and probably mediate the attachment of the 5S RNA into the large ribosomal subunit, where it forms part of the central protuberance. In the 70S ribosome it contacts protein S13 of the 30S subunit (bridge B1b), connecting the 2 subunits; this bridge is implicated in subunit movement. Contacts the P site tRNA; the 5S rRNA and some of its associated proteins might help stabilize positioning of ribosome-bound tRNAs. The sequence is that of Large ribosomal subunit protein uL5 from Mycoplasma mobile (strain ATCC 43663 / 163K / NCTC 11711) (Mesomycoplasma mobile).